The primary structure comprises 388 residues: Pepsin A-4 (388 aa).

An N-terminal signal peptide occupies residues 1–15; sequence MKWLLLLGLVALSEC. Residues 16–62 constitute a propeptide, activation peptide; the sequence is IMYKVPLIRKKSLRRTLSERGLLKDFLKKHNLNPARKYFPQWEAPTL. The Peptidase A1 domain occupies 76–385; it reads YFGTIGIGTP…DRANNQVGLA (310 aa). Residue Asp94 is part of the active site. A disulfide bridge links Cys107 with Cys112. Ser130 is modified (phosphoserine). A disulfide bridge links Cys268 with Cys272. The active site involves Asp277. The cysteines at positions 311 and 344 are disulfide-linked.

The protein belongs to the peptidase A1 family.

The protein resides in the secreted. The enzyme catalyses Preferential cleavage: hydrophobic, preferably aromatic, residues in P1 and P1' positions. Cleaves 1-Phe-|-Val-2, 4-Gln-|-His-5, 13-Glu-|-Ala-14, 14-Ala-|-Leu-15, 15-Leu-|-Tyr-16, 16-Tyr-|-Leu-17, 23-Gly-|-Phe-24, 24-Phe-|-Phe-25 and 25-Phe-|-Tyr-26 bonds in the B chain of insulin.. Its function is as follows. Shows particularly broad specificity; although bonds involving phenylalanine and leucine are preferred, many others are also cleaved to some extent. This is Pepsin A-4 (PGA4) from Homo sapiens (Human).